Here is a 93-residue protein sequence, read N- to C-terminus: MARSLKKGPFVDDHVMKKVLAAKAANDNKPIKTWSRRSMIIPEMIGLTFNVHNGKGFIPVYVTENHIGYKLGEFAPTRTFKGHKGSVQKKIGK.

It belongs to the universal ribosomal protein uS19 family.

Its function is as follows. Protein S19 forms a complex with S13 that binds strongly to the 16S ribosomal RNA. The polypeptide is Small ribosomal subunit protein uS19 (Campylobacter fetus subsp. fetus (strain 82-40)).